Here is a 156-residue protein sequence, read N- to C-terminus: C-type lectin lectoxin-Phi2 (156 aa).

The signal sequence occupies residues 1–23 (MGRFIFVSLGLLVLAFSLSGIGA). 3 disulfides stabilise this stretch: C27–C38, C55–C154, and C129–C146. The C-type lectin domain occupies 34–155 (HNVSCYKLIN…CNRRHRFLCK (122 aa)). 2 N-linked (GlcNAc...) asparagine glycosylation sites follow: N35 and N109. The Mannose-binding motif lies at 119–121 (EPN). Positions 127, 142, and 143 each coordinate Ca(2+).

This sequence belongs to the true venom lectin family. In terms of tissue distribution, expressed by the venom gland.

Its subcellular location is the secreted. Its function is as follows. Mannose-binding lectin which recognizes specific carbohydrate structures and agglutinates a variety of animal cells by binding to cell-surface glycoproteins and glycolipids. May be a calcium-dependent lectin. This Philodryas olfersii (Green snake) protein is C-type lectin lectoxin-Phi2.